The following is a 453-amino-acid chain: MDQTSIQTSDGEAATANTLKYMPGFGNDFETESLPGALPQGQNSPQKCNYGLYAEQLSGSPFTAPRGTNERSWLYRIRPSVRHTRRFSNASYPLWKTAPCLDEHSLPLGQLRWDPIPAPAERLTFLEGVRTITTAGDAATQVGMSAHAYVFNEDMVDDYFFNADGELLIVPQLGAIRVFTEMGIMDVEPLEICLIPRGMMFKILKSGEQTVWRGYICENYGAKFTLPDRGPIGANCLANPRDFKTPVAAFEDKETPCRVHVKWCGKFYVTEIGHSPLDVVAWHGNYAPFKYDLRTFSPVGAIRFDHPDPSIFSVLTAPSEDAGTANVDFVIFPPRWLVAEHTFRPPWYHRNIMSEFMGLIHGQYDAKEEGFVPGGISLHNMMLPHGPDALAFEKASNTELKPVKLDHTMAFMFETRYAQQLTKYAAELETLQDNYLECWDGLERKFDGTPGIK.

Catalysis depends on His-306, which acts as the Proton acceptor. Residues His-349 and Glu-355 each contribute to the Fe cation site. Positions 364 and 385 each coordinate homogentisate. Position 385 (His-385) interacts with Fe cation.

This sequence belongs to the homogentisate dioxygenase family. As to quaternary structure, hexamer; dimer of trimers. Fe cation is required as a cofactor.

The enzyme catalyses homogentisate + O2 = 4-maleylacetoacetate + H(+). It participates in amino-acid degradation; L-phenylalanine degradation; acetoacetate and fumarate from L-phenylalanine: step 4/6. In terms of biological role, involved in the catabolism of homogentisate (2,5-dihydroxyphenylacetate or 2,5-OH-PhAc), a central intermediate in the degradation of phenylalanine and tyrosine. Catalyzes the oxidative ring cleavage of the aromatic ring of homogentisate to yield maleylacetoacetate. The protein is Homogentisate 1,2-dioxygenase of Rhizobium johnstonii (strain DSM 114642 / LMG 32736 / 3841) (Rhizobium leguminosarum bv. viciae).